The primary structure comprises 201 residues: MARYTGPVTRKSRRLRVDLVGGDRSFERRPYPPGQAGRARIKESEYLIQLQEKQKARFTYGVMEKQFRRYYAEANAMPGKTGDNLVILLEARLDNVIYRAGLARTRRQARQLVSHGHFTVNGKKINVPSFRVSQYDIIDVRDRSRSMLWFDEAQDNLVDANVPAWLQVVPSTLRILVHQLPERAQIDIPLQEQLIVEYYSK.

Residues 91–151 (ARLDNVIYRA…DRSRSMLWFD (61 aa)) enclose the S4 RNA-binding domain.

This sequence belongs to the universal ribosomal protein uS4 family. As to quaternary structure, part of the 30S ribosomal subunit. Contacts protein S5. The interaction surface between S4 and S5 is involved in control of translational fidelity.

Its function is as follows. One of the primary rRNA binding proteins, it binds directly to 16S rRNA where it nucleates assembly of the body of the 30S subunit. With S5 and S12 plays an important role in translational accuracy. The polypeptide is Small ribosomal subunit protein uS4 (Corynebacterium urealyticum (strain ATCC 43042 / DSM 7109)).